A 352-amino-acid polypeptide reads, in one-letter code: Rhodopsin (352 aa).

At Met-1–Ala-36 the chain is on the extracellular side. Asn-2 and Asn-15 each carry an N-linked (GlcNAc...) asparagine glycan. The chain crosses the membrane as a helical span at residues Tyr-37–Val-61. Over Thr-62–Asn-73 the chain is Cytoplasmic. A helical membrane pass occupies residues Tyr-74–Tyr-96. Residues Thr-97 to Cys-110 are Extracellular-facing. A disulfide bridge links Cys-110 with Cys-187. A helical transmembrane segment spans residues Asn-111–Ile-133. The short motif at Glu-134–Trp-136 is the 'Ionic lock' involved in activated form stabilization element. The Cytoplasmic portion of the chain corresponds to Glu-134–His-152. The helical transmembrane segment at Ala-153–Val-173 threads the bilayer. Topologically, residues Gly-174 to Ser-202 are extracellular. Asn-200 is a glycosylation site (N-linked (GlcNAc...) asparagine). A helical membrane pass occupies residues Phe-203–Gly-224. Residues Arg-225 to Arg-252 lie on the Cytoplasmic side of the membrane. Residues Met-253 to Tyr-274 traverse the membrane as a helical segment. Residues Ile-275 to Pro-286 lie on the Extracellular side of the membrane. The chain crosses the membrane as a helical span at residues Phe-287–Cys-308. Lys-296 carries the post-translational modification N6-(retinylidene)lysine. Residues Met-309 to Ala-352 lie on the Cytoplasmic side of the membrane. 2 S-palmitoyl cysteine lipidation sites follow: Cys-322 and Cys-323. The interval Glu-331–Ala-352 is disordered. Over residues Ser-342–Ala-352 the composition is skewed to low complexity.

It belongs to the G-protein coupled receptor 1 family. Opsin subfamily. Phosphorylated on some or all of the serine and threonine residues present in the C-terminal region. Post-translationally, contains one covalently linked retinal chromophore.

Its subcellular location is the membrane. It localises to the cell projection. The protein localises to the cilium. It is found in the photoreceptor outer segment. Functionally, photoreceptor required for image-forming vision at low light intensity. While most salt water fish species use retinal as chromophore, most freshwater fish use 3-dehydroretinal, or a mixture of retinal and 3-dehydroretinal. Light-induced isomerization of 11-cis to all-trans retinal triggers a conformational change that activates signaling via G-proteins. Subsequent receptor phosphorylation mediates displacement of the bound G-protein alpha subunit by arrestin and terminates signaling. The sequence is that of Rhodopsin (rho) from Zosterisessor ophiocephalus (Grass goby).